The chain runs to 232 residues: Uracil-DNA glycosylase (232 aa).

Catalysis depends on Asp-66, which acts as the Proton acceptor.

This sequence belongs to the uracil-DNA glycosylase (UDG) superfamily. UNG family.

It localises to the cytoplasm. The catalysed reaction is Hydrolyzes single-stranded DNA or mismatched double-stranded DNA and polynucleotides, releasing free uracil.. Excises uracil residues from the DNA which can arise as a result of misincorporation of dUMP residues by DNA polymerase or due to deamination of cytosine. This Lactobacillus helveticus (strain DPC 4571) protein is Uracil-DNA glycosylase.